The sequence spans 154 residues: dCTP deaminase (154 aa).

Residues 79–84 (RSSLAR), Asp95, Gln124, and Tyr138 each bind dCTP.

Belongs to the dCTP deaminase family. In terms of assembly, homotrimer.

It catalyses the reaction dCTP + H2O + H(+) = dUTP + NH4(+). It functions in the pathway pyrimidine metabolism; dUMP biosynthesis; dUMP from dCTP (dUTP route): step 1/2. Catalyzes the deamination of dCTP to dUTP. This chain is dCTP deaminase, found in Pyrococcus abyssi (strain GE5 / Orsay).